Reading from the N-terminus, the 124-residue chain is Glycine cleavage system H protein (124 aa).

In terms of domain architecture, Lipoyl-binding spans 24 to 106 (TYTMGITDHA…YDDGWLVKFK (83 aa)). An N6-lipoyllysine modification is found at lysine 65.

Belongs to the GcvH family. The glycine cleavage system is composed of four proteins: P, T, L and H. (R)-lipoate serves as cofactor.

In terms of biological role, the glycine cleavage system catalyzes the degradation of glycine. The H protein shuttles the methylamine group of glycine from the P protein to the T protein. The protein is Glycine cleavage system H protein of Ruthia magnifica subsp. Calyptogena magnifica.